Reading from the N-terminus, the 216-residue chain is Imidazole glycerol phosphate synthase subunit HisH (216 aa).

One can recognise a Glutamine amidotransferase type-1 domain in the interval 2 to 216 (SIAIIDYGSG…LISNFLRWKP (215 aa)). Cys-88 (nucleophile) is an active-site residue. Residues His-196 and Glu-198 contribute to the active site.

In terms of assembly, heterodimer of HisH and HisF.

It is found in the cytoplasm. The enzyme catalyses 5-[(5-phospho-1-deoxy-D-ribulos-1-ylimino)methylamino]-1-(5-phospho-beta-D-ribosyl)imidazole-4-carboxamide + L-glutamine = D-erythro-1-(imidazol-4-yl)glycerol 3-phosphate + 5-amino-1-(5-phospho-beta-D-ribosyl)imidazole-4-carboxamide + L-glutamate + H(+). It catalyses the reaction L-glutamine + H2O = L-glutamate + NH4(+). It participates in amino-acid biosynthesis; L-histidine biosynthesis; L-histidine from 5-phospho-alpha-D-ribose 1-diphosphate: step 5/9. In terms of biological role, IGPS catalyzes the conversion of PRFAR and glutamine to IGP, AICAR and glutamate. The HisH subunit catalyzes the hydrolysis of glutamine to glutamate and ammonia as part of the synthesis of IGP and AICAR. The resulting ammonia molecule is channeled to the active site of HisF. This Bradyrhizobium diazoefficiens (strain JCM 10833 / BCRC 13528 / IAM 13628 / NBRC 14792 / USDA 110) protein is Imidazole glycerol phosphate synthase subunit HisH.